A 203-amino-acid polypeptide reads, in one-letter code: MKKIYKALISSLLLSTSINVAYAETQYVTENLSTFLRRGAGEQFKIAGSIQAGEAVNVLDRQGKYTLIRDNKNREAWILNSDLSSTPSSKEENPKLKAQVQELTLKLSRLDGDWQQRTVEMQRRTKQAEQQSAVLLEQNSQLKRELEMTKNKNRDLEAILDAGKREIAIQWFIYGGSVLGVGLLFGLLIPYVLPKRRRRDGWA.

An N-terminal signal peptide occupies residues 1-23 (MKKIYKALISSLLLSTSINVAYA). The 64-residue stretch at 24 to 87 (ETQYVTENLS…ILNSDLSSTP (64 aa)) folds into the SH3b domain. A helical transmembrane segment spans residues 167-189 (IAIQWFIYGGSVLGVGLLFGLLI).

This sequence to E.coli YgiM.

It is found in the membrane. This is an uncharacterized protein from Haemophilus influenzae (strain ATCC 51907 / DSM 11121 / KW20 / Rd).